We begin with the raw amino-acid sequence, 210 residues long: MTDDTTKNGPDATAADAAADAAAYVENDIAQEEAPQPDALELLKAENGELRDRYLRLAAEMDNLRRRTEREVKDAKSYSVAGFARDMLAVSDNLRRALDAIPAEVKDAADAGLSTLIEGVEMTERAMLSALERHGVRKLEPVGQKFDPNFHQAMFEVPNPDVPNNTVVQVVQAGFSIGERVLRPAMVGVAKGGPKAAEAETNSVFDEKDA.

Belongs to the GrpE family. Homodimer.

It localises to the cytoplasm. Functionally, participates actively in the response to hyperosmotic and heat shock by preventing the aggregation of stress-denatured proteins, in association with DnaK and GrpE. It is the nucleotide exchange factor for DnaK and may function as a thermosensor. Unfolded proteins bind initially to DnaJ; upon interaction with the DnaJ-bound protein, DnaK hydrolyzes its bound ATP, resulting in the formation of a stable complex. GrpE releases ADP from DnaK; ATP binding to DnaK triggers the release of the substrate protein, thus completing the reaction cycle. Several rounds of ATP-dependent interactions between DnaJ, DnaK and GrpE are required for fully efficient folding. The polypeptide is Protein GrpE (Rhizobium leguminosarum bv. trifolii (strain WSM2304)).